Here is a 344-residue protein sequence, read N- to C-terminus: Cyclin-G2 (344 aa).

The disordered stretch occupies residues 298–324 (CFDGSESEDSGEDMSCGEESLSSSPPS). Positions 302-313 (SESEDSGEDMSC) are enriched in acidic residues.

This sequence belongs to the cyclin family. Cyclin G subfamily. As to expression, highest levels in intestine. Intermediate levels in spleen, brain and kidney. Low levels in testis, stomach, pancreas, liver, salivary gland and muscle. According to PubMed:9139721 also abundant in thymus.

The protein resides in the cytoplasm. The protein localises to the nucleus. Functionally, may play a role in growth regulation and in negative regulation of cell cycle progression. The protein is Cyclin-G2 (Ccng2) of Mus musculus (Mouse).